Consider the following 422-residue polypeptide: MSRRYLFSSESVTEGHPDKICDQISDTILDALLYHDDHSRVAAEVVVNTGLVLITGEITSKAHVNFVELARKKIAEIGYTDADNGFSANSCAVLVAIDEQSPDISQGVSAAHEQRESLSNDELDQIGAGDQGIMFGYACNETPEFMPLPISLAHRISRRLAAVRKMGELPYLRPDGKTQVSIVYEDGKPVGIDTILISTQHTETIDSLTENSAVQAKIKSDLWEAVVQPVFGDIEIKPNQDTRFLVNPTGKFVIGGPQGDAGLTGRKIIVDTYGGYSRHGGGAFSGKDPTKVDRSAAYACRYVAKNIVAAGLADKCEVQVSYAIGVARPVSILVETFGTGKVDEDKLLKVVQELFELRPAGILQTLNLRELPSQRGGRFYQDVAAYGHFGRTDLDLPWEYTDKANLLKEAFAIPLSEVRVGV.

His-16 serves as a coordination point for ATP. Residue Asp-18 participates in Mg(2+) binding. Residue Glu-44 participates in K(+) binding. Residues Glu-57 and Gln-100 each coordinate L-methionine. The segment at 100–110 (QSPDISQGVSA) is flexible loop. ATP contacts are provided by residues 175–177 (DGK), 251–252 (KF), Asp-260, 266–267 (RK), Ala-283, and Lys-287. Residue Asp-260 coordinates L-methionine. Lys-291 provides a ligand contact to L-methionine.

The protein belongs to the AdoMet synthase family. As to quaternary structure, homotetramer; dimer of dimers. Mg(2+) is required as a cofactor. The cofactor is K(+).

It localises to the cytoplasm. It carries out the reaction L-methionine + ATP + H2O = S-adenosyl-L-methionine + phosphate + diphosphate. It participates in amino-acid biosynthesis; S-adenosyl-L-methionine biosynthesis; S-adenosyl-L-methionine from L-methionine: step 1/1. Catalyzes the formation of S-adenosylmethionine (AdoMet) from methionine and ATP. The overall synthetic reaction is composed of two sequential steps, AdoMet formation and the subsequent tripolyphosphate hydrolysis which occurs prior to release of AdoMet from the enzyme. The chain is S-adenosylmethionine synthase from Rippkaea orientalis (strain PCC 8801 / RF-1) (Cyanothece sp. (strain PCC 8801)).